Consider the following 81-residue polypeptide: Large ribosomal subunit protein bL31 (81 aa).

This sequence belongs to the bacterial ribosomal protein bL31 family. Type A subfamily. Part of the 50S ribosomal subunit.

Its function is as follows. Binds the 23S rRNA. This Fusobacterium nucleatum subsp. nucleatum (strain ATCC 25586 / DSM 15643 / BCRC 10681 / CIP 101130 / JCM 8532 / KCTC 2640 / LMG 13131 / VPI 4355) protein is Large ribosomal subunit protein bL31 (rpmE).